The following is a 128-amino-acid chain: Large ribosomal subunit protein bL19 (128 aa).

This sequence belongs to the bacterial ribosomal protein bL19 family.

Functionally, this protein is located at the 30S-50S ribosomal subunit interface and may play a role in the structure and function of the aminoacyl-tRNA binding site. The polypeptide is Large ribosomal subunit protein bL19 (Paracidovorax citrulli (strain AAC00-1) (Acidovorax citrulli)).